The chain runs to 208 residues: Probable adenylyl-sulfate kinase (208 aa).

ATP is bound at residue 38 to 45 (GLSGSGKS). Catalysis depends on S112, which acts as the Phosphoserine intermediate.

Belongs to the APS kinase family.

The catalysed reaction is adenosine 5'-phosphosulfate + ATP = 3'-phosphoadenylyl sulfate + ADP + H(+). Its pathway is sulfur metabolism; hydrogen sulfide biosynthesis; sulfite from sulfate: step 2/3. Its function is as follows. Catalyzes the synthesis of activated sulfate. In Halalkalibacterium halodurans (strain ATCC BAA-125 / DSM 18197 / FERM 7344 / JCM 9153 / C-125) (Bacillus halodurans), this protein is Probable adenylyl-sulfate kinase.